The following is an 810-amino-acid chain: Myoneurin (810 aa).

The BTB domain maps to C24 to R91. Disordered stretches follow at residues N122 to P146 and V169 to V466. The span at E173–Q183 shows a compositional bias: polar residues. Composition is skewed to basic residues over residues V185–T194 and G211–V225. The span at S229 to A238 shows a compositional bias: polar residues. A compositionally biased stretch (low complexity) spans S243 to S253. The segment at residues G254–S266 is a DNA-binding region (a.T hook 1). Positions E270–T308 are enriched in basic and acidic residues. The segment at residues K318–S330 is a DNA-binding region (a.T hook 2). Over residues T331 to E346 the composition is skewed to polar residues. Residues E350 to G361 are compositionally biased toward basic and acidic residues. A DNA-binding region (a.T hook 3) is located at residues G361 to S373. The segment covering S386–Q396 has biased composition (acidic residues). Residues I419–R428 show a composition bias toward basic residues. Residues R428–E432 carry the Nuclear localization signal motif. Residues A435–E460 show a composition bias toward acidic residues. 7 consecutive C2H2-type zinc fingers follow at residues P472–H494, Y500–H522, F528–H551, Y557–H579, Y585–H607, Y613–H635, and Y641–H663.

The protein belongs to the krueppel C2H2-type zinc-finger protein family.

It is found in the nucleus. The chain is Myoneurin (mynn) from Danio rerio (Zebrafish).